A 640-amino-acid polypeptide reads, in one-letter code: Chitin elicitor receptor kinase 1 (640 aa).

A signal peptide spans 1-31; that stretch reads MKFQMKMKSELCRTYKYWLILLVLWLSGVTQ. The Extracellular portion of the chain corresponds to 32-248; sequence RETGVLIVDA…GTVHWRSNVG (217 aa). 3 cysteine pairs are disulfide-bonded: Cys-43-Cys-104, Cys-49-Cys-166, and Cys-102-Cys-164. LysM domains are found at residues 53–98, 113–160, and 179–227; these read AYYR…NIYL, FSYT…SLTI, and STYV…KAAN. Residues 119-125 and 148-154 each bind chitin; these read TNDTAEK and DLSSIYS. A helical membrane pass occupies residues 249–269; sequence IIVGVVVGGIVLAVLLLFALI. Over 270–640 the chain is Cytoplasmic; that stretch reads FGFKHFRRRK…SQPPSGNDQL (371 aa). The disordered stretch occupies residues 286–308; it reads MQQSGLLSSSSMAGSKPSRSGST. The span at 289–307 shows a compositional bias: low complexity; sequence SGLLSSSSMAGSKPSRSGS. One can recognise a Protein kinase domain in the interval 330 to 612; it reads FSLAKKIGQG…RFAVVQLMTL (283 aa). ATP is bound by residues 336 to 344 and Lys-357; that span reads IGQGGFASV. Asp-452 functions as the Proton acceptor in the catalytic mechanism.

This sequence belongs to the protein kinase superfamily. Ser/Thr protein kinase family.

It localises to the cell membrane. The enzyme catalyses L-seryl-[protein] + ATP = O-phospho-L-seryl-[protein] + ADP + H(+). It carries out the reaction L-threonyl-[protein] + ATP = O-phospho-L-threonyl-[protein] + ADP + H(+). Lysin motif (LysM) receptor kinase required as a cell surface receptor for chitin elicitor (chitooligosaccharides) signaling leading to innate immunity in response to biotic stresses. The CERK1, MEKK1a/b, MKK1a/b/c and MPK4a/b proteins are involved in pathogen defense. The pathway induces rapid growth inhibition, cell wall depositions and accumulation of defense-related transcripts. This protein is required for response to chitin. Is able to complement the A.thaliana cerk1 mutant. This is Chitin elicitor receptor kinase 1 from Physcomitrium patens (Spreading-leaved earth moss).